The following is a 91-amino-acid chain: Acylphosphatase (91 aa).

The region spanning 5 to 91 (CSKFIVSGHV…EHDYQGFEIL (87 aa)) is the Acylphosphatase-like domain. Catalysis depends on residues Arg-20 and Asn-38.

Belongs to the acylphosphatase family.

The catalysed reaction is an acyl phosphate + H2O = a carboxylate + phosphate + H(+). In Vibrio cholerae serotype O1 (strain ATCC 39315 / El Tor Inaba N16961), this protein is Acylphosphatase (acyP).